The primary structure comprises 354 residues: Peptide chain release factor 1 (354 aa).

N5-methylglutamine is present on glutamine 231.

It belongs to the prokaryotic/mitochondrial release factor family. Methylated by PrmC. Methylation increases the termination efficiency of RF1.

Its subcellular location is the cytoplasm. Its function is as follows. Peptide chain release factor 1 directs the termination of translation in response to the peptide chain termination codons UAG and UAA. This Acholeplasma laidlawii (strain PG-8A) protein is Peptide chain release factor 1.